The chain runs to 68 residues: Large ribosomal subunit protein bL32 (68 aa).

This sequence belongs to the bacterial ribosomal protein bL32 family.

The chain is Large ribosomal subunit protein bL32 from Orientia tsutsugamushi (strain Ikeda) (Rickettsia tsutsugamushi).